We begin with the raw amino-acid sequence, 321 residues long: Homoserine O-succinyltransferase (321 aa).

The active-site Acyl-thioester intermediate is the Cys142. Residues Lys163 and Ser192 each contribute to the substrate site. The active-site Proton acceptor is the His235. Glu237 is a catalytic residue. Residue Arg249 participates in substrate binding.

The protein belongs to the MetA family.

It localises to the cytoplasm. It catalyses the reaction L-homoserine + succinyl-CoA = O-succinyl-L-homoserine + CoA. It participates in amino-acid biosynthesis; L-methionine biosynthesis via de novo pathway; O-succinyl-L-homoserine from L-homoserine: step 1/1. Transfers a succinyl group from succinyl-CoA to L-homoserine, forming succinyl-L-homoserine. The protein is Homoserine O-succinyltransferase of Shewanella loihica (strain ATCC BAA-1088 / PV-4).